The following is a 717-amino-acid chain: Polyribonucleotide nucleotidyltransferase (717 aa).

Mg(2+)-binding residues include aspartate 487 and aspartate 493. The region spanning 554 to 613 (PRITVINVPKDKIRDVIGTGGKVIREIVEYSGCKIDIEDDGTIKIAATSDEQAQKAIDRI) is the KH domain. An S1 motif domain is found at 623-691 (GQIYTGKVVK…DRGKVKLSMR (69 aa)).

The protein belongs to the polyribonucleotide nucleotidyltransferase family. It depends on Mg(2+) as a cofactor.

Its subcellular location is the cytoplasm. The catalysed reaction is RNA(n+1) + phosphate = RNA(n) + a ribonucleoside 5'-diphosphate. Involved in mRNA degradation. Catalyzes the phosphorolysis of single-stranded polyribonucleotides processively in the 3'- to 5'-direction. The protein is Polyribonucleotide nucleotidyltransferase of Acidiphilium cryptum (strain JF-5).